The chain runs to 307 residues: Mitochondrial brown fat uncoupling protein 1 (307 aa).

Topologically, residues 1-10 are mitochondrial intermembrane; it reads MVSLTTSEVH. The chain crosses the membrane as a helical span at residues 11–32; sequence PTMGVKTFSAGISACLADIITF. Solcar repeat units follow at residues 11 to 102, 111 to 201, and 210 to 295; these read PTMG…VQEY, PTLG…MKGA, and DDVP…LKKE. At 33 to 73 the chain is on the mitochondrial matrix side; it reads PLDTAKVRLQIQGEGQTSSTIRYKGVLGTITTLAKTEGWPK. A fatty acid 16:0-binding site is contributed by K56. The helical transmembrane segment at 74–96 threads the bilayer; it reads LYSGLPAGIQRQISFASLRIGLY. Over 97–116 the chain is Mitochondrial intermembrane; the sequence is DTVQEYFSSGKETPPTLGNR. Residues 117 to 133 form a helical membrane-spanning segment; that stretch reads ISAGLMTGGVAVFIGQP. At 134 to 178 the chain is on the mitochondrial matrix side; that stretch reads TEVVKVRLQAQSHLHGIKPRYTGTYNAYRIIATTESFSTLWKGTT. The chain crosses the membrane as a helical span at residues 179 to 195; sequence PNLMRNVIINRTELVTY. Topologically, residues 196 to 212 are mitochondrial intermembrane; that stretch reads DLMKGALVNNQILADDV. A helical transmembrane segment spans residues 213–232; that stretch reads PCHLLSALVAGFCTTFLASP. Residues 233–266 lie on the Mitochondrial matrix side of the membrane; that stretch reads ADVVKTRFINSLPGQYPSVPSCAMTMLTKEGPTA. The residue at position 254 (C254) is a Cysteine sulfenic acid (-SOH). The helical transmembrane segment at 267–289 threads the bilayer; the sequence is FFKGFVPSFLRLASWNVIMFVCF. K269 is a binding site for fatty acid 16:0. The Mitochondrial intermembrane portion of the chain corresponds to 290–307; the sequence is EQLKKELMKSRQTMDCTT.

Belongs to the mitochondrial carrier (TC 2.A.29) family. As to quaternary structure, most probably functions as a monomer. Binds one purine nucleotide per monomer. However, has also been suggested to function as a homodimer or a homotetramer. Tightly associates with cardiolipin in the mitochondrion inner membrane; may stabilize and regulate its activity. May undergo sulfenylation upon cold exposure. May increase the sensitivity of UCP1 thermogenic function to the activation by noradrenaline probably through structural effects. In terms of processing, may undergo ubiquitin-mediated proteasomal degradation.

It is found in the mitochondrion inner membrane. It carries out the reaction H(+)(in) = H(+)(out). Its activity is regulated as follows. Has no constitutive proton transporter activity and has to be activated by long-chain fatty acids/LCFAs. Inhibited by purine nucleotides. Both purine nucleotides and LCFAs bind the cytosolic side of the transporter and directly compete to activate or inhibit it. Activated by noradrenaline and reactive oxygen species. Despite lacking canonical translational encoding for selenocysteine, a small pool of the protein has been observed to selectively incorporate selenocysteine at 'Cys-254'. Selenocysteine-modified protein is highly sensitive to redox modification and may constitute a pool of protein highly sensitive to activation by elevated levels of reactive oxygen species (ROS). In terms of biological role, mitochondrial protein responsible for thermogenic respiration, a specialized capacity of brown adipose tissue and beige fat that participates in non-shivering adaptive thermogenesis to temperature and diet variations and more generally to the regulation of energy balance. Functions as a long-chain fatty acid/LCFA and proton symporter, simultaneously transporting one LCFA and one proton through the inner mitochondrial membrane. However, LCFAs remaining associated with the transporter via their hydrophobic tails, it results in an apparent transport of protons activated by LCFAs. Thereby, dissipates the mitochondrial proton gradient and converts the energy of substrate oxydation into heat instead of ATP. Regulates the production of reactive oxygen species/ROS by mitochondria. This chain is Mitochondrial brown fat uncoupling protein 1, found in Dicrostonyx groenlandicus (Northern collared lemming).